The following is a 497-amino-acid chain: uncharacterized protein (497 aa).

11 helical membrane-spanning segments follow: residues 91 to 111 (WVGT…STLL), 119 to 139 (VTSA…LVHS), 149 to 169 (LLGI…AQWY), 179 to 199 (AFLV…SYGL), 215 to 235 (ILFI…FIHI), 283 to 303 (MYLY…LSNF), 319 to 339 (LLMN…FGLI), 347 to 367 (MDIA…IAFA), 374 to 394 (LAGY…LSCI), 406 to 426 (FMSA…PQTF), and 439 to 459 (VSFV…YAVN).

This sequence belongs to the major facilitator superfamily. Allantoate permease family.

It is found in the golgi apparatus. The protein resides in the membrane. This is an uncharacterized protein from Schizosaccharomyces pombe (strain 972 / ATCC 24843) (Fission yeast).